The sequence spans 179 residues: Bifunctional protein PyrR (179 aa).

The PRPP-binding signature appears at 99–111; sequence VILIDDVLYTGRT.

It belongs to the purine/pyrimidine phosphoribosyltransferase family. PyrR subfamily. Homodimer and homohexamer; in equilibrium.

It carries out the reaction UMP + diphosphate = 5-phospho-alpha-D-ribose 1-diphosphate + uracil. Its function is as follows. Regulates transcriptional attenuation of the pyrimidine nucleotide (pyr) operon by binding in a uridine-dependent manner to specific sites on pyr mRNA. This disrupts an antiterminator hairpin in the RNA and favors formation of a downstream transcription terminator, leading to a reduced expression of downstream genes. Functionally, also displays a weak uracil phosphoribosyltransferase activity which is not physiologically significant. The protein is Bifunctional protein PyrR of Latilactobacillus sakei subsp. sakei (strain 23K) (Lactobacillus sakei subsp. sakei).